The primary structure comprises 206 residues: Flavin reductase (NADPH) (206 aa).

NADP(+) contacts are provided by G10, T12, G13, Q14, T15, R35, S38, and R39. S42 bears the Phosphoserine mark. NADP(+)-binding residues include D54, V55, L75, G76, and R78. S82 carries the post-translational modification Phosphoserine. Residues M87, C109, H132, H153, and I154 each coordinate NADP(+). C109 (S-nitroso-cysteine intermediate; for S-nitroso-CoA-dependent nitrosyltransferase activity) is an active-site residue. C188 functions as the S-nitroso-cysteine intermediate; for S-nitroso-CoA-dependent nitrosyltransferase activity in the catalytic mechanism.

This sequence belongs to the BLVRB family. Monomer. As to expression, predominantly expressed in liver and erythrocytes. At lower levels in heart, lung, adrenal gland and cerebrum. Expressed in adult red blood cells.

The protein localises to the cytoplasm. The enzyme catalyses reduced riboflavin + NADP(+) = riboflavin + NADPH + 2 H(+). It catalyses the reaction bilirubin IXbeta + NADP(+) = biliverdin IXbeta + NADPH + H(+). The catalysed reaction is FMNH2 + NAD(+) = FMN + NADH + 2 H(+). It carries out the reaction FMNH2 + NADP(+) = FMN + NADPH + 2 H(+). The enzyme catalyses S-nitroso-CoA + L-cysteinyl-[protein] = S-nitroso-L-cysteinyl-[protein] + CoA. It catalyses the reaction L-cysteinyl-[SCAN] + S-nitroso-CoA = S-nitroso-L-cysteinyl-[SCAN] + CoA. The catalysed reaction is S-nitroso-L-cysteinyl-[SCAN] + L-cysteinyl-[protein] = L-cysteinyl-[SCAN] + S-nitroso-L-cysteinyl-[protein]. With respect to regulation, mesobiliverdin acts as a competitive inhibitor for flavin reduction, indicating that flavin and tetrapyrrole substrates compete for the same site. Inhibited by a wide range of xanthene-based drugs, such as phloxine B, erythrosin B, tamibarotene, sulfasalazine, olsalazine, febuxostat, ataluren (PTC124) and deferasirox. Its function is as follows. Enzyme that can both act as a NAD(P)H-dependent reductase and a S-nitroso-CoA-dependent nitrosyltransferase. Promotes fetal heme degradation during development. Also expressed in adult tissues, where it acts as a regulator of hematopoiesis, intermediary metabolism (glutaminolysis, glycolysis, TCA cycle and pentose phosphate pathway) and insulin signaling. Has a broad specificity oxidoreductase activity by catalyzing the NAD(P)H-dependent reduction of a variety of flavins, such as riboflavin, FAD or FMN, biliverdins, methemoglobin and PQQ (pyrroloquinoline quinone). Contributes to fetal heme catabolism by catalyzing reduction of biliverdin IXbeta into bilirubin IXbeta in the liver. Biliverdin IXbeta, which constitutes the major heme catabolite in the fetus is not present in adult. Does not reduce bilirubin IXalpha. Can also reduce the complexed Fe(3+) iron to Fe(2+) in the presence of FMN and NADPH. Acts as a protein nitrosyltransferase by catalyzing nitrosylation of cysteine residues of target proteins, such as HMOX2, INSR and IRS1. S-nitroso-CoA-dependent nitrosyltransferase activity is mediated via a 'ping-pong' mechanism: BLVRB first associates with both S-nitroso-CoA and protein substrate, nitric oxide group is then transferred from S-nitroso-CoA to Cys-109 and Cys-188 residues of BLVRB and from S-nitroso-BLVRB to the protein substrate. Inhibits insulin signaling by mediating nitrosylation of INSR and IRS1, leading to their inhibition. This chain is Flavin reductase (NADPH), found in Homo sapiens (Human).